The following is a 78-amino-acid chain: Large ribosomal subunit protein bL28 (78 aa).

The segment at 1-20 is disordered; it reads MSRVCQVTGKGPVTGNNISH.

It belongs to the bacterial ribosomal protein bL28 family.

The chain is Large ribosomal subunit protein bL28 from Stutzerimonas stutzeri (strain A1501) (Pseudomonas stutzeri).